A 258-amino-acid chain; its full sequence is Isoprenyl transferase 2 (258 aa).

The active site involves aspartate 35. Residue aspartate 35 coordinates Mg(2+). Residues 36-39 (GNRR), tryptophan 40, arginine 50, and 81-83 (SDD) each bind substrate. The active-site Proton acceptor is the asparagine 84. Substrate is bound by residues arginine 87, arginine 207, and 213–215 (RLS). Glutamate 226 is a binding site for Mg(2+).

It belongs to the UPP synthase family. As to quaternary structure, homodimer. Requires Mg(2+) as cofactor.

In terms of biological role, catalyzes the condensation of isopentenyl diphosphate (IPP) with allylic pyrophosphates generating different type of terpenoids. The chain is Isoprenyl transferase 2 from Streptomyces coelicolor (strain ATCC BAA-471 / A3(2) / M145).